Reading from the N-terminus, the 405-residue chain is 8-amino-7-oxononanoate synthase 1 (405 aa).

R29 is a binding site for substrate. A pyridoxal 5'-phosphate-binding site is contributed by 116–117; it reads GY. H141 is a substrate binding site. Residues S187, H215, and T247 each contribute to the pyridoxal 5'-phosphate site. At K250 the chain carries N6-(pyridoxal phosphate)lysine. Residue T368 coordinates substrate.

This sequence belongs to the class-II pyridoxal-phosphate-dependent aminotransferase family. BioF subfamily. Homodimer. Requires pyridoxal 5'-phosphate as cofactor.

It carries out the reaction 6-carboxyhexanoyl-[ACP] + L-alanine + H(+) = (8S)-8-amino-7-oxononanoate + holo-[ACP] + CO2. It participates in cofactor biosynthesis; biotin biosynthesis. In terms of biological role, catalyzes the decarboxylative condensation of pimeloyl-[acyl-carrier protein] and L-alanine to produce 8-amino-7-oxononanoate (AON), [acyl-carrier protein], and carbon dioxide. The protein is 8-amino-7-oxononanoate synthase 1 of Polaromonas sp. (strain JS666 / ATCC BAA-500).